The following is a 302-amino-acid chain: Protoheme IX farnesyltransferase 2 (302 aa).

Helical transmembrane passes span 14–34, 36–56, 85–105, 108–128, 133–153, 163–183, 209–229, 230–250, and 264–284; these read IIFG…QGSV, WWLL…GCAI, AALA…WFCT, LATG…SLYM, VYGT…GYCA, AILL…IAIF, IVLY…GGYA, GYGY…MALS, and QVFF…AVDG.

It belongs to the UbiA prenyltransferase family. Protoheme IX farnesyltransferase subfamily.

It is found in the cell inner membrane. It catalyses the reaction heme b + (2E,6E)-farnesyl diphosphate + H2O = Fe(II)-heme o + diphosphate. Its pathway is porphyrin-containing compound metabolism; heme O biosynthesis; heme O from protoheme: step 1/1. Functionally, converts heme B (protoheme IX) to heme O by substitution of the vinyl group on carbon 2 of heme B porphyrin ring with a hydroxyethyl farnesyl side group. The polypeptide is Protoheme IX farnesyltransferase 2 (Chromobacterium violaceum (strain ATCC 12472 / DSM 30191 / JCM 1249 / CCUG 213 / NBRC 12614 / NCIMB 9131 / NCTC 9757 / MK)).